Reading from the N-terminus, the 622-residue chain is Threonine--tRNA ligase (622 aa).

Residues 1-134 (MKTLLIHSDY…GHPLSELSRK (134 aa)) form an editing domain region. The tract at residues 199–498 (PHVKYIKEKE…TLEDKPPALP (300 aa)) is catalytic. Residues C291, H343, and H467 each coordinate Zn(2+).

It belongs to the class-II aminoacyl-tRNA synthetase family. As to quaternary structure, homodimer. Zn(2+) is required as a cofactor.

It is found in the cytoplasm. It catalyses the reaction tRNA(Thr) + L-threonine + ATP = L-threonyl-tRNA(Thr) + AMP + diphosphate + H(+). In terms of biological role, catalyzes the attachment of threonine to tRNA(Thr) in a two-step reaction: L-threonine is first activated by ATP to form Thr-AMP and then transferred to the acceptor end of tRNA(Thr). Also edits incorrectly charged L-seryl-tRNA(Thr). This is Threonine--tRNA ligase from Methanococcus vannielii (strain ATCC 35089 / DSM 1224 / JCM 13029 / OCM 148 / SB).